A 306-amino-acid polypeptide reads, in one-letter code: Stimulator of interferon genes protein 5 (306 aa).

Residues 1 to 50 (MMSNDSQSEKRTAKWTGSGTPIAEGEESSSPSAHQTRQKATAADDDDDQQ) are disordered. 2',3'-cGAMP-binding residues include Y119, R180, and R186.

The protein belongs to the STING family.

In terms of biological role, facilitator of innate immune signaling that acts as a sensor of second messenger signals produced by cyclic GMP-AMP synthase-like receptors (cGLRs) and promotes the production of type I interferon. Innate immune response is triggered in response to nucleotides from viruses and bacteria delivered to the cytoplasm. Acts by binding cyclic dinucleotides: recognizes and binds 2'-3' linked cGAMP (2'-3'-cGAMP), a second messengers produced by cGLRs in response to nucleotides in the cytosol, such as double-stranded RNA (dsRNA). Upon binding to 2'-3'-cGAMP, oligomerizes and promotes the recruitment and subsequent activation of the transcription factor IRF3 to induce expression of type I interferon. The chain is Stimulator of interferon genes protein 5 from Stylophora pistillata (Smooth cauliflower coral).